A 501-amino-acid chain; its full sequence is Aldehyde dehydrogenase 1A1 (501 aa).

At S2 the chain carries N-acetylserine. N6-acetyllysine occurs at positions 91 and 128. NAD(+) is bound by residues 167-170 (LPWN), 193-196 (KPAE), 226-227 (GP), and 246-247 (GS). Position 252 is an N6-acetyllysine (K252). E269 functions as the Proton acceptor in the catalytic mechanism. Residue 269 to 271 (ELG) coordinates NAD(+). The active-site Nucleophile is C303. The mediates interaction with PRMT3 stretch occupies residues 336 to 501 (LTPGVSQGPQ…VTVKISQKNS (166 aa)). Phosphothreonine is present on T337. Residue 349 to 353 (EQYDK) participates in NAD(+) binding. N6-acetyllysine occurs at positions 353 and 367. Residue 400 to 402 (EIF) coordinates NAD(+). N6-acetyllysine is present on K410. At S413 the chain carries Phosphoserine. An N6-acetyllysine mark is found at K419, K435, and K495.

The protein belongs to the aldehyde dehydrogenase family. As to quaternary structure, homotetramer. Interacts with PRMT3; the interaction is direct, inhibits ALDH1A1 aldehyde dehydrogenase activity and is independent of the methyltransferase activity of PRMT3. The N-terminus is blocked most probably by acetylation.

It is found in the cytoplasm. It localises to the cytosol. The protein resides in the cell projection. Its subcellular location is the axon. It carries out the reaction an aldehyde + NAD(+) + H2O = a carboxylate + NADH + 2 H(+). The catalysed reaction is all-trans-retinal + NAD(+) + H2O = all-trans-retinoate + NADH + 2 H(+). It catalyses the reaction 9-cis-retinal + NAD(+) + H2O = 9-cis-retinoate + NADH + 2 H(+). The enzyme catalyses 11-cis-retinal + NAD(+) + H2O = 11-cis-retinoate + NADH + 2 H(+). It carries out the reaction 13-cis-retinal + NAD(+) + H2O = 13-cis-retinoate + NADH + 2 H(+). The catalysed reaction is 3-deoxyglucosone + NAD(+) + H2O = 2-dehydro-3-deoxy-D-gluconate + NADH + 2 H(+). It catalyses the reaction (E)-4-hydroxynon-2-enal + NAD(+) + H2O = (E)-4-hydroxynon-2-enoate + NADH + 2 H(+). The enzyme catalyses malonaldehyde + NAD(+) + H2O = 3-oxopropanoate + NADH + 2 H(+). It carries out the reaction hexanal + NAD(+) + H2O = hexanoate + NADH + 2 H(+). The catalysed reaction is propanal + NAD(+) + H2O = propanoate + NADH + 2 H(+). It catalyses the reaction acetaldehyde + NAD(+) + H2O = acetate + NADH + 2 H(+). The enzyme catalyses benzaldehyde + NAD(+) + H2O = benzoate + NADH + 2 H(+). It carries out the reaction 4-aminobutanal + NAD(+) + H2O = 4-aminobutanoate + NADH + 2 H(+). Its pathway is cofactor metabolism; retinol metabolism. Cytosolic dehydrogenase that catalyzes the irreversible oxidation of a wide range of aldehydes to their corresponding carboxylic acid. Functions downstream of retinol dehydrogenases and catalyzes the oxidation of retinaldehyde into retinoic acid, the second step in the oxidation of retinol/vitamin A into retinoic acid. This pathway is crucial to control the levels of retinol and retinoic acid, two important molecules which excess can be teratogenic and cytotoxic. Also oxidizes aldehydes resulting from lipid peroxidation like (E)-4-hydroxynon-2-enal/HNE, malonaldehyde and hexanal that form protein adducts and are highly cytotoxic. By participating for instance to the clearance of (E)-4-hydroxynon-2-enal/HNE in the lens epithelium prevents the formation of HNE-protein adducts and lens opacification. Also functions downstream of fructosamine-3-kinase in the fructosamine degradation pathway by catalyzing the oxidation of 3-deoxyglucosone, the carbohydrate product of fructosamine 3-phosphate decomposition, which is itself a potent glycating agent that may react with lysine and arginine side-chains of proteins. Also has an aminobutyraldehyde dehydrogenase activity and is probably part of an alternative pathway for the biosynthesis of GABA/4-aminobutanoate in midbrain, thereby playing a role in GABAergic synaptic transmission. The protein is Aldehyde dehydrogenase 1A1 of Equus caballus (Horse).